A 549-amino-acid polypeptide reads, in one-letter code: Threonine--tRNA ligase catalytic subunit (549 aa).

Residues 142–437 (DHRIIGDRLD…LLEHFRGKLP (296 aa)) are catalytic. Cys235, His286, and His414 together coordinate Zn(2+).

Belongs to the class-II aminoacyl-tRNA synthetase family. In terms of assembly, homodimer. Probably interacts with its editing subunit. Requires Zn(2+) as cofactor.

The protein resides in the cytoplasm. The catalysed reaction is tRNA(Thr) + L-threonine + ATP = L-threonyl-tRNA(Thr) + AMP + diphosphate + H(+). In terms of biological role, catalyzes the attachment of threonine to tRNA(Thr) in a two-step reaction: L-threonine is first activated by ATP to form Thr-AMP and then transferred to the acceptor end of tRNA(Thr). Also activates L-serine and transfers it to tRNA(Thr) but cannot deacylate incorrectly charged amino acid; unlike most archaea the editing function is found in a freestanding protein. This chain is Threonine--tRNA ligase catalytic subunit, found in Sulfolobus acidocaldarius (strain ATCC 33909 / DSM 639 / JCM 8929 / NBRC 15157 / NCIMB 11770).